The sequence spans 328 residues: Phosphate acyltransferase (328 aa).

Belongs to the PlsX family. As to quaternary structure, homodimer. Probably interacts with PlsY.

The protein resides in the cytoplasm. The catalysed reaction is a fatty acyl-[ACP] + phosphate = an acyl phosphate + holo-[ACP]. It functions in the pathway lipid metabolism; phospholipid metabolism. Functionally, catalyzes the reversible formation of acyl-phosphate (acyl-PO(4)) from acyl-[acyl-carrier-protein] (acyl-ACP). This enzyme utilizes acyl-ACP as fatty acyl donor, but not acyl-CoA. This is Phosphate acyltransferase from Staphylococcus haemolyticus (strain JCSC1435).